We begin with the raw amino-acid sequence, 932 residues long: MYCBP-associated protein (932 aa).

Disordered stretches follow at residues 1–39 (MMKKITERQSPLKLLEKKRAKAPEQPTPPIQEEPEPVSN) and 165–187 (EEPKPKPPKEEERPSPWAPPPQH). Over residues 165–178 (EEPKPKPPKEEERP) the composition is skewed to basic and acidic residues. Phosphoserine is present on Ser559. A Phosphothreonine modification is found at Thr560. Position 566 is a phosphoserine (Ser566). Residues 789-886 (LPDEQGQKSP…TAPSQEPIDP (98 aa)) are disordered. Polar residues predominate over residues 795-806 (QKSPPVTESKVT). Residues 810 to 869 (AGKEDRRGGAQEKKQLGTKDKDDKRGSKTPGKEDRPNSKKLKPKDDKKVVKSASRDRLLS) show a composition bias toward basic and acidic residues.

Interacts with MYCBP.

It localises to the cytoplasm. The protein localises to the membrane. Functionally, may play a role in spermatogenesis. May be involved in synaptic processes. The chain is MYCBP-associated protein from Mus musculus (Mouse).